Here is a 157-residue protein sequence, read N- to C-terminus: Phosphopantetheine adenylyltransferase (157 aa).

Substrate is bound at residue Ser8. Residues 8-9 (SF) and His16 each bind ATP. Lys40, Thr72, and Arg86 together coordinate substrate. ATP contacts are provided by residues 87 to 89 (GLR), Glu97, and 122 to 128 (HSFLSSS).

The protein belongs to the bacterial CoaD family. Homohexamer. The cofactor is Mg(2+).

It is found in the cytoplasm. It carries out the reaction (R)-4'-phosphopantetheine + ATP + H(+) = 3'-dephospho-CoA + diphosphate. Its pathway is cofactor biosynthesis; coenzyme A biosynthesis; CoA from (R)-pantothenate: step 4/5. In terms of biological role, reversibly transfers an adenylyl group from ATP to 4'-phosphopantetheine, yielding dephospho-CoA (dPCoA) and pyrophosphate. The sequence is that of Phosphopantetheine adenylyltransferase from Prochlorococcus marinus (strain MIT 9303).